Consider the following 878-residue polypeptide: NUT family member 2B (878 aa).

Disordered stretches follow at residues 273–324 (WSQG…DDSC), 417–512 (QKSQ…PEEI), 527–560 (LLGPSLGATGEPEKQREEGKVKQPQEEDWTPPDP), 624–693 (PPLK…GMAR), 709–757 (LRAA…EEEE), and 775–878 (WLPQ…HCSQ). Pro residues-rich tracts occupy residues 278–288 (PLPPPPPPAAQ) and 427–444 (CLPPPATPRLEPRGPPAP). Over residues 476 to 487 (TKARRPPPRPHR) the composition is skewed to basic residues. Positions 537 to 551 (EPEKQREEGKVKQPQ) are enriched in basic and acidic residues.

This sequence belongs to the NUT family.

This is NUT family member 2B (NUTM2B) from Homo sapiens (Human).